The sequence spans 341 residues: Ribulose-5-phosphate reductase (341 aa).

The Zn(2+) site is built by cysteine 38, histidine 64, glutamate 65, and glutamate 144.

It belongs to the zinc-containing alcohol dehydrogenase family. Requires Zn(2+) as cofactor.

It catalyses the reaction D-ribitol 5-phosphate + NADP(+) = D-ribulose 5-phosphate + NADPH + H(+). Its pathway is cell wall biogenesis; poly(ribitol phosphate) teichoic acid biosynthesis. Its function is as follows. Catalyzes the NADPH dependent reduction of D-ribulose 5-phosphate to D-ribitol 5-phosphate. This chain is Ribulose-5-phosphate reductase, found in Bacillus spizizenii (strain ATCC 23059 / NRRL B-14472 / W23) (Bacillus subtilis subsp. spizizenii).